Consider the following 391-residue polypeptide: MVTVDEVRKAQRAEGPATILAIGTATPPNCVDQSTYPDYYFRITKSEHRTELKEKFQRMCDKSRIKKRYMYLTEEILKENPSMCEYMAPSLDARQDMVVVEIPKLGKEAATKAIKEWGQLKSKITHLVFCTTSGVDMPGADYQLTKLLGLRPSVKRLMMYQQGCFAGGTVLRLAKDLAENNKGARVLAVCSEITAVTFRGPSDTHLDSLVGQALFGDGAAAIIVGSDPLPDIERPLFELVSAAQTILPDSDGAIDGHLREVGLTFHLLKDVPGLISKNIEKSLNEAFKPLDITDWNSLFWIAHPGGPAILDQVEAKLGLKPEKLEATRNILSEYGNMSSACVLFILDEVRRKSVANGHKTTGEGLEWGVLFGFGPGLTVETVVLHSVAAST.

Cysteine 164 is an active-site residue.

The protein belongs to the thiolase-like superfamily. Chalcone/stilbene synthases family. In terms of assembly, homodimer.

It carries out the reaction (E)-4-coumaroyl-CoA + 3 malonyl-CoA + 3 H(+) = 2',4,4',6'-tetrahydroxychalcone + 3 CO2 + 4 CoA. It participates in secondary metabolite biosynthesis; flavonoid biosynthesis. Functionally, polyketide synthase producing p-coumaryltriacetic acid lactone (CTAL) and slightly naringenin chalcone. Can use p-coumaryl-CoA as substrate. The chain is Polyketide synthase 3 (PKS3) from Rubus idaeus (Raspberry).